The primary structure comprises 399 residues: MESKSHAHCFRAQRVLHGKQWQQDAVVTVDENGTISAIESYDGQRHADAIPLGPVDLMPGLIDSHVHGSQGCDVMDATHDSLNTMSRYFATLGVTAFVATTVTAPVAKIRAALAQVAKSKHDGVDGAEILGAYLEGPYFTEKNKGAHPTQWFRELAVEELEDWISYSDNQLLKVALAPEKTGALDAIRYLDAHGIHVMLGHSDADYEQVKAALAAGAKGIVHCYNGMRGLHHRDPGVVGAGLLHPHCFVEMIADGHHVHPAAIDVAHRCCGSRMTLITDAMRATGMPDGQYTLGEYQVDMKQGVVMTSSGGLAGSTLTLLRGVKNIHRWLNVPIEQAWLMASYTPAESLGIQHQLGSLEVGKYASMVAVSSDFSIEKTWVKGRLVFDAATSPRQEALCI.

3 residues coordinate a divalent metal cation: H65, H67, and E135. Position 146-147 (146-147) interacts with substrate; the sequence is AH. 2 residues coordinate a divalent metal cation: H201 and H222. Residues 225–226, R233, and 254–257 each bind substrate; these read NG and DGHH. D279 is a binding site for a divalent metal cation. D279 functions as the Proton donor/acceptor in the catalytic mechanism. Position 312–314 (312–314) interacts with substrate; that stretch reads LAG.

The protein belongs to the metallo-dependent hydrolases superfamily. NagA family. In terms of assembly, homodimer. A divalent metal cation serves as cofactor.

It carries out the reaction N-acetyl-D-glucosamine 6-phosphate + H2O = D-glucosamine 6-phosphate + acetate. It participates in amino-sugar metabolism; N-acetylneuraminate degradation; D-fructose 6-phosphate from N-acetylneuraminate: step 4/5. Its function is as follows. Involved in the first committed step in the biosynthesis of amino-sugar-nucleotides. Catalyzes the hydrolysis of the N-acetyl group of N-acetylglucosamine-6-phosphate (GlcNAc-6-P) to yield glucosamine 6-phosphate and acetate. The sequence is that of N-acetylglucosamine-6-phosphate deacetylase (manD) from Vibrio furnissii.